We begin with the raw amino-acid sequence, 379 residues long: LIM/homeobox protein Lhx9 (379 aa).

2 consecutive LIM zinc-binding domains span residues 51–112 (TLCA…RFSV) and 113–175 (QRCA…LVQG). Disordered regions lie at residues 232-257 (ENDT…TSFK) and 310-379 (RQEN…TNLF). The span at 248–257 (KTKRMRTSFK) shows a compositional bias: basic residues. The homeobox DNA-binding region spans 249-308 (TKRMRTSFKHHQLRTTKSYFAINHNPDAKDLKQLAQKTGLTKRVLQVWFQNARAKFRRNL). Positions 326–379 (APASTDSAALTPTGAASTLSDLTSPSLNVGASVTPNMDSHESGSPSQTTLTNLF) are enriched in polar residues.

Isoform 1 and isoform 3 are expressed in ovary, testis, brain and heart. Isoform 4 and isoform 5 are expressed in brain.

The protein resides in the nucleus. May be involved in gonadal development. The chain is LIM/homeobox protein Lhx9 (lhx9) from Glandirana rugosa (Japanese wrinkled frog).